The primary structure comprises 461 residues: Vitamin K-dependent protein C (461 aa).

The signal sequence occupies residues 1-18 (MWQFRIFLLFASTWGISG). Positions 19–41 (VSAHPDPVFSSSEGAHQVLRVRR) are excised as a propeptide. Positions 42–87 (ANSFLEEVRAGSLERECMEEICDFEEAQEIFQNVEDTLAFWIKYFD) constitute a Gla domain. Glu-47, Glu-48, Glu-55, Glu-57, Glu-60, Glu-61, Glu-66, Glu-67, Glu-70, and Glu-76 each carry 4-carboxyglutamate. Residues Cys-58 and Cys-63 are joined by a disulfide bond. Disulfide bonds link Cys-91–Cys-110, Cys-100–Cys-105, Cys-104–Cys-119, Cys-121–Cys-130, Cys-139–Cys-150, Cys-146–Cys-159, Cys-161–Cys-174, Cys-182–Cys-320, and Cys-239–Cys-255. EGF-like domains follow at residues 96–131 (LDHQCDSPCCGHGTCIDGLGGFSCSCDKGWEGRFCQ) and 135–175 (GFQD…MHCR). A (3R)-3-hydroxyaspartate modification is found at Asp-112. Residues 213–450 (IVNGTLTKQG…YLKWIHSYIG (238 aa)) enclose the Peptidase S1 domain. An N-linked (GlcNAc...) asparagine glycan is attached at Asn-215. Catalysis depends on His-254, which acts as the Charge relay system. A glycan (N-linked (GlcNAc...) asparagine) is linked at Asn-291. The Charge relay system role is filled by Asp-300. Asn-355 carries an N-linked (GlcNAc...) asparagine glycan. 2 disulfides stabilise this stretch: Cys-373-Cys-387 and Cys-398-Cys-426. The active-site Charge relay system is Ser-402.

Belongs to the peptidase S1 family. Synthesized as a single chain precursor, which is cleaved into a light chain and a heavy chain held together by a disulfide bond. The enzyme is then activated by thrombin, which cleaves a tetradecapeptide from the amino end of the heavy chain; this reaction, which occurs at the surface of endothelial cells, is strongly promoted by thrombomodulin. Post-translationally, the vitamin K-dependent, enzymatic carboxylation of some Glu residues allows the modified protein to bind calcium. The iron and 2-oxoglutarate dependent 3-hydroxylation of aspartate and asparagine is (R) stereospecific within EGF domains. In terms of tissue distribution, plasma; synthesized in the liver.

The protein resides in the secreted. Its subcellular location is the golgi apparatus. It is found in the endoplasmic reticulum. It carries out the reaction Degradation of blood coagulation factors Va and VIIIa.. In terms of biological role, protein C is a vitamin K-dependent serine protease that regulates blood coagulation by inactivating factors Va and VIIIa in the presence of calcium ions and phospholipids. Exerts a protective effect on the endothelial cell barrier function. The chain is Vitamin K-dependent protein C (Proc) from Rattus norvegicus (Rat).